Reading from the N-terminus, the 365-residue chain is MAPWTLWRCCQRVVGWVPVLFITFVVVWSYYAYVVELCVFTIFGNEENGKTVVYLVAFHLFFVMFVWSYWMTIFTSPASPSKEFYLSNSEKERYEKEFSQERQQEILRRAARALPIYTTSASKTIRYCEKCQLIKPDRAHHCSACDSCILKMDHHCPWVNNCVGFSNYKFFLLFLLYSLLYCLFVAATVLEYFIKFWTNELTDTRAKFHVLFLFFVSAMFFISVLSLFSYHCWLVGKNRTTIESFRAPTFSYGPDGNGFSLGCSKNWRQVFGDEKKYWLLPIFSSLGDGCSFPTRLVGMDPEQASVTNQNEYARSSGSNQPFPIKPLSESKNRLLDSESQWLENGAEEGIVKSGTNNHVTVAIEN.

The Cytoplasmic segment spans residues 1-14 (MAPWTLWRCCQRVV). Residues 15-35 (GWVPVLFITFVVVWSYYAYVV) form a helical membrane-spanning segment. The Lumenal portion of the chain corresponds to 36–53 (ELCVFTIFGNEENGKTVV). Residues 54–74 (YLVAFHLFFVMFVWSYWMTIF) traverse the membrane as a helical segment. The Cytoplasmic portion of the chain corresponds to 75–169 (TSPASPSKEF…NNCVGFSNYK (95 aa)). Residues 126–176 (RYCEKCQLIKPDRAHHCSACDSCILKMDHHCPWVNNCVGFSNYKFFLLFLL) form the DHHC domain. Positions 128 and 131 each coordinate Zn(2+). Residues Lys135 and 140–143 (HHCS) each bind substrate. 5 residues coordinate Zn(2+): His141, Cys142, Cys145, Cys148, and His155. Cys156 functions as the S-palmitoyl cysteine intermediate in the catalytic mechanism. Cys162 is a Zn(2+) binding site. The helical transmembrane segment at 170-190 (FFLLFLLYSLLYCLFVAATVL) threads the bilayer. Over 191-207 (EYFIKFWTNELTDTRAK) the chain is Lumenal. A helical membrane pass occupies residues 208-231 (FHVLFLFFVSAMFFISVLSLFSYH). The Cytoplasmic segment spans residues 232-365 (CWLVGKNRTT…NNHVTVAIEN (134 aa)). A phosphoserine mark is found at Ser305, Ser330, and Ser339.

Belongs to the DHHC palmitoyltransferase family. In terms of processing, autopalmitoylated (in vitro).

It is found in the golgi apparatus membrane. The protein resides in the cell membrane. It localises to the cytoplasm. Its subcellular location is the perinuclear region. The protein localises to the endoplasmic reticulum membrane. It is found in the endoplasmic reticulum-Golgi intermediate compartment membrane. The catalysed reaction is L-cysteinyl-[protein] + hexadecanoyl-CoA = S-hexadecanoyl-L-cysteinyl-[protein] + CoA. It carries out the reaction L-cysteinyl-[protein] + tetradecanoyl-CoA = S-tetradecanoyl-L-cysteinyl-[protein] + CoA. The enzyme catalyses L-cysteinyl-[protein] + octadecanoyl-CoA = S-octadecanoyl-L-cysteinyl-[protein] + CoA. In terms of biological role, palmitoyltransferase that could catalyze the addition of palmitate onto various protein substrates. Catalyzes palmitoylation of Cys residues in the cytoplasmic C-terminus of EGFR, and modulates the duration of EGFR signaling by modulating palmitoylation-dependent EGFR internalization and degradation. Has a preference for acyl-CoA with C16 fatty acid chains. Can also utilize acyl-CoA with C14 and C18 fatty acid chains. May palmitoylate CALHM1 subunit of gustatory voltage-gated ion channels and modulate channel gating and kinetics. Functionally, (Microbial infection) Dominant palmitoyltransferase responsible for lipidation of SARS coronavirus-2/SARS-CoV-2 spike protein. Through a sequential action with ZDHHC9, rapidly and efficiently palmitoylates spike protein following its synthesis in the endoplasmic reticulum (ER). In the infected cell, promotes spike biogenesis by protecting it from premature ER degradation, increases half-life and controls the lipid organization of its immediate membrane environment. Once the virus has formed, spike palmitoylation controls fusion with the target cell. This Homo sapiens (Human) protein is Palmitoyltransferase ZDHHC20.